We begin with the raw amino-acid sequence, 144 residues long: Small ribosomal subunit protein eS19B (144 aa).

It belongs to the eukaryotic ribosomal protein eS19 family. As to quaternary structure, component of the small ribosomal subunit (SSU). Mature yeast ribosomes consist of a small (40S) and a large (60S) subunit. The 40S small subunit contains 1 molecule of ribosomal RNA (18S rRNA) and 33 different proteins (encoded by 57 genes). The large 60S subunit contains 3 rRNA molecules (25S, 5.8S and 5S rRNA) and 46 different proteins (encoded by 81 genes).

The protein localises to the cytoplasm. Its function is as follows. Component of the ribosome, a large ribonucleoprotein complex responsible for the synthesis of proteins in the cell. The small ribosomal subunit (SSU) binds messenger RNAs (mRNAs) and translates the encoded message by selecting cognate aminoacyl-transfer RNA (tRNA) molecules. The large subunit (LSU) contains the ribosomal catalytic site termed the peptidyl transferase center (PTC), which catalyzes the formation of peptide bonds, thereby polymerizing the amino acids delivered by tRNAs into a polypeptide chain. The nascent polypeptides leave the ribosome through a tunnel in the LSU and interact with protein factors that function in enzymatic processing, targeting, and the membrane insertion of nascent chains at the exit of the ribosomal tunnel. eS19 is required for proper maturation of the small (40S) ribosomal subunit. Binds to 40S pre-ribosomal particles, probably required after association of NOC4 but before association of ENP1, TSR1 and RIO2 with 20/21S pre-rRNA. Required for proper maturation of the small (40S) ribosomal subunit. Binds to 40s pre-ribosomal particles, probably required after association of NOC4 but before association of ENP1, TSR1 and RIO2 with 20/21S pre-rRNA. This Saccharomyces cerevisiae (strain ATCC 204508 / S288c) (Baker's yeast) protein is Small ribosomal subunit protein eS19B.